The chain runs to 343 residues: MSAFTPASEVLLRHSDDFEQSRILFAGDLQDDLPARLDTAASRAHTQQFHHWQVLSRQMGDNARFSLVATANDVADCDTLIYYWPKNKPEAQFQLMNLLSLLPVGTDIFVVGENRSGVRSAEQMLADYAPLNKVDSARRCGLYFGRLEKQPVFDANKFWGEYSVDGLTVKTLPGVFSRDGLDVGSQLLLSTLTPHTKGKVLDVGCGAGVLSVAFARHSPKIRLTLCDVSAPAVEASRATLAANSVEGEVFASNVFSEVKGRFDMIISNPPFHDGMQTSLDAAQTLIRGAVRHLNSGGELRIVANAFLPYPDVLDETFGFHEVIAQTGRFKVYRAIMTRQAKKG.

The protein belongs to the methyltransferase superfamily. RsmC family. Monomer.

The protein resides in the cytoplasm. The enzyme catalyses guanosine(1207) in 16S rRNA + S-adenosyl-L-methionine = N(2)-methylguanosine(1207) in 16S rRNA + S-adenosyl-L-homocysteine + H(+). Its function is as follows. Specifically methylates the guanine in position 1207 of 16S rRNA in the 30S particle. The chain is Ribosomal RNA small subunit methyltransferase C from Escherichia coli O7:K1 (strain IAI39 / ExPEC).